The primary structure comprises 191 residues: Lipid A acyltransferase PagP (191 aa).

The N-terminal stretch at 1 to 23 is a signal peptide; the sequence is MRLFYQRISLLISLCGFFSAAWA. Residues His62, Asp105, and Ser106 contribute to the active site.

This sequence belongs to the lipid A palmitoyltransferase family. Homodimer.

The protein localises to the cell outer membrane. The enzyme catalyses a lipid A + a 1,2-diacyl-sn-glycero-3-phosphocholine = a hepta-acyl lipid A + a 2-acyl-sn-glycero-3-phosphocholine. It carries out the reaction a lipid IVA + a 1,2-diacyl-sn-glycero-3-phosphocholine = a lipid IVB + a 2-acyl-sn-glycero-3-phosphocholine. The catalysed reaction is a lipid IIA + a 1,2-diacyl-sn-glycero-3-phosphocholine = a lipid IIB + a 2-acyl-sn-glycero-3-phosphocholine. Functionally, transfers a fatty acid residue from the sn-1 position of a phospholipid to the N-linked hydroxyfatty acid chain on the proximal unit of lipid A or its precursors. The sequence is that of Lipid A acyltransferase PagP from Sodalis glossinidius (strain morsitans).